A 39-amino-acid polypeptide reads, in one-letter code: Photosystem II reaction center protein J (39 aa).

The helical transmembrane segment at 9 to 29 (LWLVATVGGIAAITVLGIFIY) threads the bilayer.

It belongs to the PsbJ family. As to quaternary structure, PSII is composed of 1 copy each of membrane proteins PsbA, PsbB, PsbC, PsbD, PsbE, PsbF, PsbH, PsbI, PsbJ, PsbK, PsbL, PsbM, PsbT, PsbX, PsbY, PsbZ, Psb30/Ycf12, at least 3 peripheral proteins of the oxygen-evolving complex and a large number of cofactors. It forms dimeric complexes.

The protein localises to the plastid. It localises to the chloroplast thylakoid membrane. In terms of biological role, one of the components of the core complex of photosystem II (PSII). PSII is a light-driven water:plastoquinone oxidoreductase that uses light energy to abstract electrons from H(2)O, generating O(2) and a proton gradient subsequently used for ATP formation. It consists of a core antenna complex that captures photons, and an electron transfer chain that converts photonic excitation into a charge separation. This Pyropia yezoensis (Susabi-nori) protein is Photosystem II reaction center protein J.